The following is a 419-amino-acid chain: L-rhamnose isomerase (419 aa).

Mn(2+)-binding residues include H262, D294, and D296.

The protein belongs to the rhamnose isomerase family. In terms of assembly, homotetramer. The cofactor is Mn(2+).

It localises to the cytoplasm. It carries out the reaction L-rhamnopyranose = L-rhamnulose. It functions in the pathway carbohydrate degradation; L-rhamnose degradation; glycerone phosphate from L-rhamnose: step 1/3. Its function is as follows. Catalyzes the interconversion of L-rhamnose and L-rhamnulose. The chain is L-rhamnose isomerase from Shigella sonnei (strain Ss046).